Consider the following 317-residue polypeptide: Egg-laying defective protein 26 (317 aa).

In terms of domain architecture, LRAT spans 156–277 (EVNVSGVKFY…CSTGVPFSYD (122 aa)). Active-site residues include His166 and His178. Cys261 functions as the Acyl-thioester intermediate in the catalytic mechanism.

As to expression, highly expressed in the cells of the spermatheca, the mouth, and the lining of the pharynx, the rectum, and the excretory canal. Also expressed in the pharyngeal intestinal junction cell.

Its subcellular location is the apical cell membrane. Putative acyltransferase. Plays a role in the morphogenesis of a vulval toroid cell, vulF, which is located where the vulva and the uterus connect. Not required for specifying vulval cell fate. The protein is Egg-laying defective protein 26 of Caenorhabditis elegans.